A 450-amino-acid polypeptide reads, in one-letter code: Ribosomal protein uS12 methylthiotransferase RimO (450 aa).

An MTTase N-terminal domain is found at 16–126 (PRISFVSLGC…VLDAVHQAVP (111 aa)). 6 residues coordinate [4Fe-4S] cluster: C25, C61, C90, C157, C161, and C164. The Radical SAM core domain occupies 143–380 (LTPRHYAYLK…MLKQQAISAR (238 aa)). The TRAM domain maps to 383–449 (KRKVGTRQQV…AYDLIGSAVG (67 aa)).

This sequence belongs to the methylthiotransferase family. RimO subfamily. The cofactor is [4Fe-4S] cluster.

The protein localises to the cytoplasm. The enzyme catalyses L-aspartate(89)-[ribosomal protein uS12]-hydrogen + (sulfur carrier)-SH + AH2 + 2 S-adenosyl-L-methionine = 3-methylsulfanyl-L-aspartate(89)-[ribosomal protein uS12]-hydrogen + (sulfur carrier)-H + 5'-deoxyadenosine + L-methionine + A + S-adenosyl-L-homocysteine + 2 H(+). In terms of biological role, catalyzes the methylthiolation of an aspartic acid residue of ribosomal protein uS12. The polypeptide is Ribosomal protein uS12 methylthiotransferase RimO (Azorhizobium caulinodans (strain ATCC 43989 / DSM 5975 / JCM 20966 / LMG 6465 / NBRC 14845 / NCIMB 13405 / ORS 571)).